Reading from the N-terminus, the 861-residue chain is Piwi-like protein 1 (861 aa).

A compositionally biased stretch (basic residues) spans 1–13; it reads MTGRARARARGRA. The interval 1–64 is disordered; that stretch reads MTGRARARAR…TAGGTAKSQG (64 aa). Arginine 14 is subject to Omega-N-methylarginine; by PRMT5; alternate. Symmetric dimethylarginine; by PRMT5; alternate is present on arginine 14. Residues 17–27 show a composition bias toward polar residues; it reads ETAQLVGSTAS. Arginine 49 carries the post-translational modification Omega-N-methylarginine; by PRMT5. Arginine 53 carries the omega-N-methylarginine; alternate modification. Arginine 53 is modified (symmetric dimethylarginine; alternate). The D-box signature appears at 217-224; sequence RRLLKIMN. In terms of domain architecture, PAZ spans 278 to 391; sequence TVLDFMFNFY…LIPELCYLTG (114 aa). The tract at residues 316-318 is required for binding 2'-O-methylated 3'-end of piRNAs; the sequence is TYR. Position 370 is an omega-N-methylarginine; by PRMT5 (arginine 370). The MID region stretch occupies residues 479–615; sequence SKETRGAPLI…LQMNCKMGGE (137 aa). Residues 555-847 enclose the Piwi domain; sequence IVVCLLSSNR…LAFLVGQSIH (293 aa). Active-site residues include aspartate 632, glutamate 670, aspartate 702, and histidine 836.

Belongs to the argonaute family. Piwi subfamily. As to quaternary structure, interacts (via Piwi domain) with DICER1, suggesting that it forms ribonucleoprotein RISC complexes; this interaction is regulated by HSP90AB1 activity. Interacts with MAEL, KIF17, PABPC1, PRMT5 and WDR77. Interacts (when methylated on arginine residues) with TDRD1, TDRKH/TDRD2, RNF17/TDRD4, TDRD6, TDRD7 and TDRD9. Interacts with CLOCK. Interacts with MOV10L1. Interacts with ANAPC10; interaction oly takes place following piRNA-binding. Interacts with RNF8; leading to sequester RNF8 in the cytoplasm. Interacts with TEX19. Requires Mg(2+) as cofactor. In terms of processing, arginine methylation by PRMT5 is required for the interaction with Tudor domain-containing protein (TDRD1, TDRKH/TDRD2, RNF17/TDRD4, TDRD6, TDRD7 and TDRD9) and subsequent localization to the meiotic nuage, also named P granule. Ubiquitinated by the anaphase promoting complex/cyclosome (APC/C) in late spermatids, leading to its degradation. Ubiquitination only takes place following piRNA-binding in adult testis. Ubiquitination and degradation in late spermatogenesis by APC/C is probably required to release RNF8 from the cytoplasm and promote histone to protamine exchange by RNF8. Expressed in spermatocytes and spermatids. Also detected in prostate cancer (at protein level). Detected in most fetal and adult tissues. Expressed in testes, specifically in germline cells; detected in spermatocytes and spermatids during spermatogenesis. Increased expression in testicular tumors originating from embryonic germ cells with retention of germ cells phenotype. No expression in testicular tumors of somatic origin, such as Sertoli cell and Leydig cell tumors. Overexpressed in gastric cancer cells. Isoform 3: Ubiquitously expressed, and specifically in CD34(+) hematopoietic progenitor cells but not in more differentiated cells.

The protein localises to the cytoplasm. Functionally, endoribonuclease that plays a central role in postnatal germ cells by repressing transposable elements and preventing their mobilization, which is essential for the germline integrity. Acts via the piRNA metabolic process, which mediates the repression of transposable elements during meiosis by forming complexes composed of piRNAs and Piwi proteins and governs the methylation and subsequent repression of transposons. Directly binds methylated piRNAs, a class of 24 to 30 nucleotide RNAs that are generated by a Dicer-independent mechanism and are primarily derived from transposons and other repeated sequence elements. Strongly prefers a uridine in the first position of their guide (g1U preference, also named 1U-bias). Not involved in the piRNA amplification loop, also named ping-pong amplification cycle. Acts as an endoribonuclease that cleaves transposon messenger RNAs. Besides their function in transposable elements repression, piRNAs are probably involved in other processes during meiosis such as translation regulation. Probable component of some RISC complex, which mediates RNA cleavage and translational silencing. Also plays a role in the formation of chromatoid bodies and is required for some miRNAs stability. Required to sequester RNF8 in the cytoplasm until late spermatogenesis; RNF8 being released upon ubiquitination and degradation of PIWIL1. May be a negative developmental regulator. The chain is Piwi-like protein 1 (PIWIL1) from Homo sapiens (Human).